Reading from the N-terminus, the 429-residue chain is Enolase (429 aa).

A (2R)-2-phosphoglycerate-binding site is contributed by Q163. The active-site Proton donor is the E205. Residues D242, E285, and D312 each coordinate Mg(2+). Residues K337, R366, S367, and K388 each coordinate (2R)-2-phosphoglycerate. K337 functions as the Proton acceptor in the catalytic mechanism.

This sequence belongs to the enolase family. Requires Mg(2+) as cofactor.

Its subcellular location is the cytoplasm. It is found in the secreted. The protein resides in the cell surface. The catalysed reaction is (2R)-2-phosphoglycerate = phosphoenolpyruvate + H2O. It functions in the pathway carbohydrate degradation; glycolysis; pyruvate from D-glyceraldehyde 3-phosphate: step 4/5. Functionally, catalyzes the reversible conversion of 2-phosphoglycerate (2-PG) into phosphoenolpyruvate (PEP). It is essential for the degradation of carbohydrates via glycolysis. In Oceanobacillus iheyensis (strain DSM 14371 / CIP 107618 / JCM 11309 / KCTC 3954 / HTE831), this protein is Enolase.